The primary structure comprises 410 residues: Riboflavin biosynthesis protein RibBA (410 aa).

Positions 1-205 are DHBP synthase; sequence MENKRIDTIE…IKDLVAFQMR (205 aa). Residues 30-31, D35, 144-148, and E168 each bind D-ribulose 5-phosphate; these read RE and RVGHT. E31 is a binding site for Mg(2+). H147 contributes to the Mg(2+) binding site. The tract at residues 206 to 410 is GTP cyclohydrolase II; sequence RSKLVQRAVE…ISCSCGSGNH (205 aa). 256–260 provides a ligand contact to GTP; sequence RVHSQ. Positions 261, 272, and 274 each coordinate Zn(2+). GTP contacts are provided by residues Q277, 299–301, and T321; that span reads EGR. D333 serves as the catalytic Proton acceptor; for GTP cyclohydrolase activity. R335 serves as the catalytic Nucleophile; for GTP cyclohydrolase activity. Residues T356 and K361 each contribute to the GTP site.

The protein in the N-terminal section; belongs to the DHBP synthase family. This sequence in the C-terminal section; belongs to the GTP cyclohydrolase II family. Mg(2+) serves as cofactor. It depends on Mn(2+) as a cofactor. The cofactor is Zn(2+).

It catalyses the reaction D-ribulose 5-phosphate = (2S)-2-hydroxy-3-oxobutyl phosphate + formate + H(+). It carries out the reaction GTP + 4 H2O = 2,5-diamino-6-hydroxy-4-(5-phosphoribosylamino)-pyrimidine + formate + 2 phosphate + 3 H(+). Its pathway is cofactor biosynthesis; riboflavin biosynthesis; 2-hydroxy-3-oxobutyl phosphate from D-ribulose 5-phosphate: step 1/1. It participates in cofactor biosynthesis; riboflavin biosynthesis; 5-amino-6-(D-ribitylamino)uracil from GTP: step 1/4. Its function is as follows. Catalyzes the conversion of D-ribulose 5-phosphate to formate and 3,4-dihydroxy-2-butanone 4-phosphate. Catalyzes the conversion of GTP to 2,5-diamino-6-ribosylamino-4(3H)-pyrimidinone 5'-phosphate (DARP), formate and pyrophosphate. The chain is Riboflavin biosynthesis protein RibBA from Chlorobium phaeovibrioides (strain DSM 265 / 1930) (Prosthecochloris vibrioformis (strain DSM 265)).